A 418-amino-acid chain; its full sequence is UDP-N-acetylglucosamine 1-carboxyvinyltransferase (418 aa).

Position 22–23 (22–23) interacts with phosphoenolpyruvate; it reads KN. Arginine 92 is a UDP-N-acetyl-alpha-D-glucosamine binding site. Cysteine 116 acts as the Proton donor in catalysis. Residue cysteine 116 is modified to 2-(S-cysteinyl)pyruvic acid O-phosphothioketal. UDP-N-acetyl-alpha-D-glucosamine-binding residues include aspartate 305 and valine 327.

The protein belongs to the EPSP synthase family. MurA subfamily.

It localises to the cytoplasm. The enzyme catalyses phosphoenolpyruvate + UDP-N-acetyl-alpha-D-glucosamine = UDP-N-acetyl-3-O-(1-carboxyvinyl)-alpha-D-glucosamine + phosphate. Its pathway is cell wall biogenesis; peptidoglycan biosynthesis. Cell wall formation. Adds enolpyruvyl to UDP-N-acetylglucosamine. This is UDP-N-acetylglucosamine 1-carboxyvinyltransferase from Endomicrobium trichonymphae.